A 288-amino-acid polypeptide reads, in one-letter code: Quinate/shikimate dehydrogenase (288 aa).

Residues K71 and D107 each coordinate substrate. NAD(+) contacts are provided by residues 132-135 (AGGA), 155-158 (NRRD), K205, 232-235 (CVYN), and G255.

This sequence belongs to the shikimate dehydrogenase family. Homodimer.

The catalysed reaction is L-quinate + NAD(+) = 3-dehydroquinate + NADH + H(+). It catalyses the reaction L-quinate + NADP(+) = 3-dehydroquinate + NADPH + H(+). It carries out the reaction shikimate + NADP(+) = 3-dehydroshikimate + NADPH + H(+). The enzyme catalyses shikimate + NAD(+) = 3-dehydroshikimate + NADH + H(+). It participates in metabolic intermediate biosynthesis; chorismate biosynthesis; chorismate from D-erythrose 4-phosphate and phosphoenolpyruvate: step 4/7. Its function is as follows. The actual biological function of YdiB remains unclear, nor is it known whether 3-dehydroshikimate or quinate represents the natural substrate. Catalyzes the reversible NAD-dependent reduction of both 3-dehydroshikimate (DHSA) and 3-dehydroquinate to yield shikimate (SA) and quinate, respectively. It can use both NAD or NADP for catalysis, however it has higher catalytic efficiency with NAD. The sequence is that of Quinate/shikimate dehydrogenase from Shigella sonnei (strain Ss046).